The sequence spans 694 residues: Elongation factor G (694 aa).

The 280-residue stretch at 8-287 (EDYRNFGIMA…AVVEFLPAPT (280 aa)) folds into the tr-type G domain. GTP contacts are provided by residues 17–24 (AHIDAGKT), 86–90 (DTPGH), and 140–143 (NKMD).

This sequence belongs to the TRAFAC class translation factor GTPase superfamily. Classic translation factor GTPase family. EF-G/EF-2 subfamily.

It localises to the cytoplasm. Functionally, catalyzes the GTP-dependent ribosomal translocation step during translation elongation. During this step, the ribosome changes from the pre-translocational (PRE) to the post-translocational (POST) state as the newly formed A-site-bound peptidyl-tRNA and P-site-bound deacylated tRNA move to the P and E sites, respectively. Catalyzes the coordinated movement of the two tRNA molecules, the mRNA and conformational changes in the ribosome. The protein is Elongation factor G of Brucella suis (strain ATCC 23445 / NCTC 10510).